A 102-amino-acid chain; its full sequence is Small ribosomal subunit protein uS10 (102 aa).

This sequence belongs to the universal ribosomal protein uS10 family. In terms of assembly, part of the 30S ribosomal subunit.

Functionally, involved in the binding of tRNA to the ribosomes. The chain is Small ribosomal subunit protein uS10 from Caulobacter sp. (strain K31).